The following is a 470-amino-acid chain: Ribosomal protein uS12 methylthiotransferase RimO (470 aa).

An MTTase N-terminal domain is found at threonine 4–alanine 120. The [4Fe-4S] cluster site is built by cysteine 13, cysteine 49, cysteine 83, cysteine 155, cysteine 159, and cysteine 162. One can recognise a Radical SAM core domain in the interval serine 141 to glutamate 371. The region spanning arginine 374–alanine 442 is the TRAM domain. The disordered stretch occupies residues arginine 447–glycine 470.

Belongs to the methylthiotransferase family. RimO subfamily. [4Fe-4S] cluster is required as a cofactor.

The protein localises to the cytoplasm. It carries out the reaction L-aspartate(89)-[ribosomal protein uS12]-hydrogen + (sulfur carrier)-SH + AH2 + 2 S-adenosyl-L-methionine = 3-methylsulfanyl-L-aspartate(89)-[ribosomal protein uS12]-hydrogen + (sulfur carrier)-H + 5'-deoxyadenosine + L-methionine + A + S-adenosyl-L-homocysteine + 2 H(+). Its function is as follows. Catalyzes the methylthiolation of an aspartic acid residue of ribosomal protein uS12. The polypeptide is Ribosomal protein uS12 methylthiotransferase RimO (Anaeromyxobacter sp. (strain Fw109-5)).